Reading from the N-terminus, the 451-residue chain is Opioid growth factor receptor-like protein 1 (451 aa).

Disordered regions lie at residues 1–89 (MGNL…TAKP) and 308–451 (ENFI…VLVQ). Low complexity predominate over residues 43–66 (PGQESEQPAQPPEQAGGRPGASPA). The segment covering 322 to 341 (GSKAQKMSSPLASSHNSQTS) has biased composition (polar residues). 2 stretches are compositionally biased toward basic and acidic residues: residues 362 to 381 (TAED…DRPS) and 389 to 399 (AKPRNTEKDSN). A compositionally biased stretch (low complexity) spans 431 to 443 (NDNQDNENPGNTN).

It belongs to the opioid growth factor receptor family. Ubiquitous.

In Homo sapiens (Human), this protein is Opioid growth factor receptor-like protein 1 (OGFRL1).